The primary structure comprises 319 residues: Carboxylesterase NlhH (319 aa).

The Involved in the stabilization of the negatively charged intermediate by the formation of the oxyanion hole signature appears at 88–90 (HGG). Active-site residues include serine 162, aspartate 260, and histidine 290.

Belongs to the 'GDXG' lipolytic enzyme family. As to quaternary structure, monomer.

The catalysed reaction is a carboxylic ester + H2O = an alcohol + a carboxylate + H(+). Hydrolyzes various short-chain esters. This is Carboxylesterase NlhH (nlhH) from Mycobacterium tuberculosis (strain CDC 1551 / Oshkosh).